A 277-amino-acid polypeptide reads, in one-letter code: NH(3)-dependent NAD(+) synthetase (277 aa).

46–53 (GISGGQDS) provides a ligand contact to ATP. Asp-52 serves as a coordination point for Mg(2+). A deamido-NAD(+)-binding site is contributed by Arg-141. Thr-161 lines the ATP pocket. A Mg(2+)-binding site is contributed by Glu-166. Positions 174 and 181 each coordinate deamido-NAD(+). ATP contacts are provided by Lys-190 and Thr-212. 262-263 (HK) is a deamido-NAD(+) binding site.

Belongs to the NAD synthetase family. Homodimer.

The catalysed reaction is deamido-NAD(+) + NH4(+) + ATP = AMP + diphosphate + NAD(+) + H(+). Its pathway is cofactor biosynthesis; NAD(+) biosynthesis; NAD(+) from deamido-NAD(+) (ammonia route): step 1/1. Its function is as follows. Catalyzes the ATP-dependent amidation of deamido-NAD to form NAD. Uses ammonia as a nitrogen source. This is NH(3)-dependent NAD(+) synthetase from Corynebacterium efficiens (strain DSM 44549 / YS-314 / AJ 12310 / JCM 11189 / NBRC 100395).